A 96-amino-acid polypeptide reads, in one-letter code: Large ribosomal subunit protein bL28 (96 aa).

It belongs to the bacterial ribosomal protein bL28 family.

The sequence is that of Large ribosomal subunit protein bL28 from Agrobacterium fabrum (strain C58 / ATCC 33970) (Agrobacterium tumefaciens (strain C58)).